A 104-amino-acid polypeptide reads, in one-letter code: Large ribosomal subunit protein uL24 (104 aa).

Belongs to the universal ribosomal protein uL24 family. In terms of assembly, part of the 50S ribosomal subunit.

One of two assembly initiator proteins, it binds directly to the 5'-end of the 23S rRNA, where it nucleates assembly of the 50S subunit. In terms of biological role, one of the proteins that surrounds the polypeptide exit tunnel on the outside of the subunit. The protein is Large ribosomal subunit protein uL24 of Herminiimonas arsenicoxydans.